A 505-amino-acid chain; its full sequence is MSTFGAEVDQVWPAVTGDSPHLTNFGRKLLKDCRQVQKPIGGYENLGNVIKLSAEFPLEFGVNSVKVYRQSPSRLARINEEVASAYPLIHERTLGLYLQYLEHKCRWGNAVEKPIYRNLSLCGFVQRLLVKRCASFFARNDKYLLVSGESGASGFEAVGTREEKAPLVLANVLSYDDIKLSALLSVSSRTEFVNEGERTNCGHVDLNTKTLERHGVIVGMIGARLSRRNLMEFQDIVIARQQNTRERGYGMALDEPATTRDEDYRRLWREFYATRDLIHGQAVIDNQRFGPSKNKMDVFDNLVMKRRYAISFDMLLLEAEARAKRVKKLAYIHVVGFGLGVWKAAEQQERIFMETFEQRMRTLGNRLNNVGLVHFSWFSITHCGGLSNGSLIEIPGHPKDGIRVLISKRNPARKLSDPEHAGMLLVVSYAWDGNALPGNEFWMKMLQSTGDSSTACSTLVAELHNPYINTKFCNGGNLHIASPEHGVLHIAEYAKRVIRSESDAL.

Residues arginine 198, glycine 336, glycine 338, glycine 340, valine 341, tryptophan 342, tryptophan 377, aspartate 432, asparagine 439, glutamate 440, glycine 450, and aspartate 451 each coordinate ADP-D-ribose.

It catalyses the reaction N(omega)-(ADP-D-ribosyl)-L-arginyl-[protein] + H2O = ADP-D-ribose + L-arginyl-[protein]. The catalysed reaction is N(omega)-(ADP-D-ribosyl)-L-arginine + H2O = ADP-D-ribose + L-arginine. Functionally, protein ADP-ribosyl hydrolase that specifically removes mono-ADP-ribosyl modifications from protein arginine residues. The polypeptide is ADP-ribosylarginine hydrolase CG2909 (Drosophila melanogaster (Fruit fly)).